A 270-amino-acid chain; its full sequence is Putative phosphoenolpyruvate synthase regulatory protein (270 aa).

Residue 149–156 participates in ADP binding; that stretch reads GVSRSGKT.

Belongs to the pyruvate, phosphate/water dikinase regulatory protein family. PSRP subfamily.

It carries out the reaction [pyruvate, water dikinase] + ADP = [pyruvate, water dikinase]-phosphate + AMP + H(+). It catalyses the reaction [pyruvate, water dikinase]-phosphate + phosphate + H(+) = [pyruvate, water dikinase] + diphosphate. Bifunctional serine/threonine kinase and phosphorylase involved in the regulation of the phosphoenolpyruvate synthase (PEPS) by catalyzing its phosphorylation/dephosphorylation. This Alteromonas mediterranea (strain DSM 17117 / CIP 110805 / LMG 28347 / Deep ecotype) protein is Putative phosphoenolpyruvate synthase regulatory protein.